Here is a 202-residue protein sequence, read N- to C-terminus: uncharacterized protein (202 aa).

Positions 1–202 (MRGILRMTVL…KGLRSAAEKR (202 aa)) constitute an START domain.

May play a role in the interaction of the bacterium with animal cells. This is an uncharacterized protein from Pseudomonas aeruginosa (strain ATCC 15692 / DSM 22644 / CIP 104116 / JCM 14847 / LMG 12228 / 1C / PRS 101 / PAO1).